Here is a 444-residue protein sequence, read N- to C-terminus: N-succinylarginine dihydrolase (444 aa).

Substrate is bound by residues 19–28, asparagine 110, and 137–138; these read AGLSFGNVAS and HR. Residue glutamate 174 is part of the active site. Arginine 214 provides a ligand contact to substrate. Histidine 250 is an active-site residue. Aspartate 252 and asparagine 362 together coordinate substrate. Cysteine 368 serves as the catalytic Nucleophile.

This sequence belongs to the succinylarginine dihydrolase family. As to quaternary structure, homodimer.

The enzyme catalyses N(2)-succinyl-L-arginine + 2 H2O + 2 H(+) = N(2)-succinyl-L-ornithine + 2 NH4(+) + CO2. Its pathway is amino-acid degradation; L-arginine degradation via AST pathway; L-glutamate and succinate from L-arginine: step 2/5. Catalyzes the hydrolysis of N(2)-succinylarginine into N(2)-succinylornithine, ammonia and CO(2). The protein is N-succinylarginine dihydrolase of Shewanella oneidensis (strain ATCC 700550 / JCM 31522 / CIP 106686 / LMG 19005 / NCIMB 14063 / MR-1).